Consider the following 375-residue polypeptide: Coproporphyrin III ferrochelatase (375 aa).

S59 and Y128 together coordinate Fe-coproporphyrin III. Fe(2+) is bound by residues H191 and E286.

This sequence belongs to the ferrochelatase family.

It is found in the cytoplasm. The enzyme catalyses Fe-coproporphyrin III + 2 H(+) = coproporphyrin III + Fe(2+). It participates in porphyrin-containing compound metabolism; protoheme biosynthesis. Involved in coproporphyrin-dependent heme b biosynthesis. Catalyzes the insertion of ferrous iron into coproporphyrin III to form Fe-coproporphyrin III. The chain is Coproporphyrin III ferrochelatase from Streptomyces coelicolor (strain ATCC BAA-471 / A3(2) / M145).